The sequence spans 1008 residues: Serine/threonine-protein kinase PRP4 homolog (1008 aa).

The interval 1–103 (MAAAEAPSLR…PAKRTKLDDL (103 aa)) is disordered. Ala2 bears the N-acetylalanine mark. Phosphoserine occurs at positions 8, 20, 23, and 32. Basic residues-rich tracts occupy residues 39 to 59 (KHSR…KHKH) and 67 to 81 (RKHK…HKRK). Basic and acidic residues predominate over residues 82 to 91 (EVADASDKEG). A phosphoserine mark is found at Ser87 and Ser93. The residue at position 99 (Lys99) is an N6-acetyllysine; alternate. Lys99 is covalently cross-linked (Glycyl lysine isopeptide (Lys-Gly) (interchain with G-Cter in SUMO2); alternate). Lys111 is covalently cross-linked (Glycyl lysine isopeptide (Lys-Gly) (interchain with G-Cter in SUMO2)). Residue Lys117 forms a Glycyl lysine isopeptide (Lys-Gly) (interchain with G-Cter in SUMO2); alternate linkage. A Glycyl lysine isopeptide (Lys-Gly) (interchain with G-Cter in SUMO1); alternate cross-link involves residue Lys117. Ser131 carries the phosphoserine modification. Phosphotyrosine is present on Tyr140. Disordered regions lie at residues 140–536 (YESG…EDEE) and 560–584 (SNLS…SPDD). Ser142, Ser144, and Ser166 each carry phosphoserine. The segment covering 157–168 (GNRSSTRSSSTK) has biased composition (low complexity). Glycyl lysine isopeptide (Lys-Gly) (interchain with G-Cter in SUMO2) cross-links involve residues Lys170 and Lys177. Composition is skewed to basic residues over residues 179-202 (STKK…KKSK) and 214-230 (RSKS…SKRS). Phosphoserine is present on residues Ser239, Ser241, Ser257, Ser277, Ser283, Ser292, and Ser294. Basic and acidic residues predominate over residues 247–270 (RSQEKVGKARSPVDDKAKVEDKSK). A compositionally biased stretch (basic residues) spans 302 to 315 (SKDRRSRSKERKSK). Over residues 316-325 (RPEADKEKKP) the composition is skewed to basic and acidic residues. Residues Ser328, Ser354, Ser356, Ser366, and Ser368 each carry the phosphoserine modification. Residues 342–367 (PSRRPGRSPKRRSLSPKQRDKSRRSR) show a composition bias toward basic residues. Residue Thr385 is modified to Phosphothreonine. At Ser387 the chain carries Phosphoserine. Basic and acidic residues-rich tracts occupy residues 395–408 (RSLE…ERRR) and 415–429 (RPRD…RSKD). A phosphoserine mark is found at Ser427, Ser431, and Ser437. A compositionally biased stretch (basic residues) spans 438–498 (PARRRASRSP…RGGRRRRSRS (61 aa)). 8 positions are modified to phosphoserine: Ser519, Ser520, Ser521, Ser566, Ser570, Ser577, Ser579, and Ser581. Positions 519-536 (SSSDDNLEDFDVEEEDEE) are enriched in acidic residues. Low complexity predominate over residues 563-582 (SVPSEPSSPQSSTRSRSPSP). Residues Lys594 and Lys660 each participate in a glycyl lysine isopeptide (Lys-Gly) (interchain with G-Cter in SUMO2) cross-link. The Protein kinase domain occupies 688 to 1004 (YNVYGYTGQG…INQALQHAFI (317 aa)). ATP contacts are provided by residues 694–702 (TGQGVFSNV) and Lys718. At Lys718 the chain carries N6-acetyllysine. Asp816 functions as the Proton acceptor in the catalytic mechanism. Tyr850 carries the post-translational modification Phosphotyrosine. Position 853 is a phosphoserine (Ser853).

This sequence belongs to the protein kinase superfamily. CMGC Ser/Thr protein kinase family. In terms of assembly, interacts with CLK1 C-terminus. Associates with the U5 snRNP and NCOR1 deacetylase complexes. Identified in the spliceosome C complex. Phosphorylated by CLK1. Autophosphorylated; phosphorylation inhibits interaction with its targets, such as PRPF6 or SMARCA4.

It is found in the nucleus. The protein localises to the chromosome. It localises to the centromere. Its subcellular location is the kinetochore. The enzyme catalyses L-seryl-[protein] + ATP = O-phospho-L-seryl-[protein] + ADP + H(+). It carries out the reaction L-threonyl-[protein] + ATP = O-phospho-L-threonyl-[protein] + ADP + H(+). Its function is as follows. Serine/threonine kinase involved in spliceosomal assembly as well as mitosis and signaling regulation. Connects chromatin mediated regulation of transcription and pre-mRNA splicing. During spliceosomal assembly, interacts with and phosphorylates PRPF6 and PRPF31, components of the U4/U6-U5 tri-small nuclear ribonucleoprotein (snRNP), to facilitate the formation of the spliceosome B complex. Plays a role in regulating transcription and the spindle assembly checkpoint (SAC). Associates with U5 snRNP and NCOR1 deacetylase complexes which may allow a coordination of pre-mRNA splicing with chromatin remodeling events involved in transcriptional regulation. Associates and probably phosphorylates SMARCA4 and NCOR1. Phosphorylates SRSF1. Associates with kinetochores during mitosis and is necessary for recruitment and maintenance of the checkpoint proteins such as MAD1L1 and MAD12L1 at the kinetochores. Phosphorylates and regulates the activity of the transcription factors such as ELK1 and KLF13. Phosphorylates nuclear YAP1 and WWTR1/TAZ which induces nuclear exclusion and regulates Hippo signaling pathway, involved in tissue growth control. The sequence is that of Serine/threonine-protein kinase PRP4 homolog (PRP4K) from Bos taurus (Bovine).